Consider the following 430-residue polypeptide: Terminal nucleotidyltransferase 5B (430 aa).

The tract at residues 1 to 46 (MMPSESETESRDRAAAQVGTAAAAAVAKAAPAGGGPDPEASSASLG) is disordered. Positions 15-44 (AAQVGTAAAAAVAKAAPAGGGPDPEASSAS) are enriched in low complexity.

The protein belongs to the TENT family.

The protein resides in the cytoplasm. Its subcellular location is the nucleus. It catalyses the reaction RNA(n) + ATP = RNA(n)-3'-adenine ribonucleotide + diphosphate. Its function is as follows. Catalyzes the transfer of one adenosine molecule from an ATP to an mRNA poly(A) tail bearing a 3'-OH terminal group in an ATP hydrolysis-dependent manner. May be involved in maintaining the translation efficiency of at least some genes through preventing degradation of their mRNAs. Prefers RNA molecules that are adenosine-rich close to 3'-end. In addition, may inhibit cell proliferation and cell cycle progression through ubiquitination of beta-catenin/CTNNB1. This is Terminal nucleotidyltransferase 5B from Bos taurus (Bovine).